Consider the following 393-residue polypeptide: Dwarfin sma-3 (393 aa).

The MH1 domain maps to 10–139 (PAVKKLLGWK…YQRLSRPQGL (130 aa)). Residues C65, C110, C124, and H129 each contribute to the Zn(2+) site. Residues 136–190 (PQGLNSSMPSPQPISSPNTIWQSSGSSTASCASSPSPSVFSEDGGEVQVHQRPPP) form a disordered region. Residues 141–176 (SSMPSPQPISSPNTIWQSSGSSTASCASSPSPSVFS) are compositionally biased toward low complexity. One can recognise an MH2 domain in the interval 197 to 393 (WAQITYFELN…TNLMEPNSMT (197 aa)).

Belongs to the dwarfin/SMAD family.

It is found in the cytoplasm. The protein resides in the nucleus. Its function is as follows. Involved in TGF-beta pathway. Plays a role in male tail tip morphogenesis. The sequence is that of Dwarfin sma-3 from Caenorhabditis elegans.